A 210-amino-acid polypeptide reads, in one-letter code: Imidazole glycerol phosphate synthase subunit HisH 1 (210 aa).

Residues 3–210 (KIAIVDYGMC…LDNFLSFSNV (208 aa)) enclose the Glutamine amidotransferase type-1 domain. Cysteine 82 (nucleophile) is an active-site residue. Residues histidine 189 and glutamate 191 contribute to the active site.

As to quaternary structure, heterodimer of HisH and HisF.

Its subcellular location is the cytoplasm. It catalyses the reaction 5-[(5-phospho-1-deoxy-D-ribulos-1-ylimino)methylamino]-1-(5-phospho-beta-D-ribosyl)imidazole-4-carboxamide + L-glutamine = D-erythro-1-(imidazol-4-yl)glycerol 3-phosphate + 5-amino-1-(5-phospho-beta-D-ribosyl)imidazole-4-carboxamide + L-glutamate + H(+). It carries out the reaction L-glutamine + H2O = L-glutamate + NH4(+). Its pathway is amino-acid biosynthesis; L-histidine biosynthesis; L-histidine from 5-phospho-alpha-D-ribose 1-diphosphate: step 5/9. IGPS catalyzes the conversion of PRFAR and glutamine to IGP, AICAR and glutamate. The HisH subunit provides the glutamine amidotransferase activity that produces the ammonia necessary to HisF for the synthesis of IGP and AICAR. This Parasynechococcus marenigrum (strain WH8102) protein is Imidazole glycerol phosphate synthase subunit HisH 1 (hisH1).